The sequence spans 342 residues: tRNA N6-adenosine threonylcarbamoyltransferase (342 aa).

Fe cation is bound by residues histidine 115 and histidine 119. Residues 137–141 (IVSGG), aspartate 170, glycine 183, aspartate 187, and asparagine 276 each bind substrate. Position 304 (aspartate 304) interacts with Fe cation.

The protein belongs to the KAE1 / TsaD family. It depends on Fe(2+) as a cofactor.

Its subcellular location is the cytoplasm. The catalysed reaction is L-threonylcarbamoyladenylate + adenosine(37) in tRNA = N(6)-L-threonylcarbamoyladenosine(37) in tRNA + AMP + H(+). Functionally, required for the formation of a threonylcarbamoyl group on adenosine at position 37 (t(6)A37) in tRNAs that read codons beginning with adenine. Is involved in the transfer of the threonylcarbamoyl moiety of threonylcarbamoyl-AMP (TC-AMP) to the N6 group of A37, together with TsaE and TsaB. TsaD likely plays a direct catalytic role in this reaction. This Staphylococcus saprophyticus subsp. saprophyticus (strain ATCC 15305 / DSM 20229 / NCIMB 8711 / NCTC 7292 / S-41) protein is tRNA N6-adenosine threonylcarbamoyltransferase.